The sequence spans 645 residues: Aminopeptidase P1 (645 aa).

Ser2 carries the N-acetylserine modification. A peptide is bound by residues Arg69 and His420. The Mn(2+) site is built by Asp440, Asp451, and His514. The a peptide site is built by His514, His523, and Glu549. Mn(2+) is bound by residues Glu549 and Glu563.

The protein belongs to the peptidase M24B family. Homodimer. Interacts with N-1-naphthylphthalamic acid (NPA). Mn(2+) serves as cofactor. Requires Zn(2+) as cofactor. Glycosylated. Also present in a non-glycosylated form. Ubiquitous with preferential expression in 5 days-old seedlings, roots, flowers, inflorescences and rosette leaves (at protein levels).

It localises to the cytoplasm. It is found in the cell membrane. The protein resides in the microsome membrane. It carries out the reaction Release of any N-terminal amino acid, including proline, that is linked to proline, even from a dipeptide or tripeptide.. With respect to regulation, inhibited by EGTA and apstatin, and, to some extent, by the flavonoid kaempferol. In terms of biological role, catalyzes the removal of a penultimate prolyl residue from the N-termini of peptides, such as Arg-Pro-Pro. Aminopeptidase that binds to the auxin transport inhibitor N-1-naphthylphthalamic acid (NPA). May play a negative role in the regulation of PIN auxin transport proteins. This is Aminopeptidase P1 from Arabidopsis thaliana (Mouse-ear cress).